The primary structure comprises 451 residues: 3-phosphoshikimate 1-carboxyvinyltransferase (451 aa).

Residues lysine 38, serine 39, and arginine 43 each contribute to the 3-phosphoshikimate site. Lysine 38 contributes to the phosphoenolpyruvate binding site. 2 residues coordinate phosphoenolpyruvate: glycine 111 and arginine 140. Residues serine 185, glutamine 187, aspartate 335, and lysine 362 each coordinate 3-phosphoshikimate. Residue glutamine 187 coordinates phosphoenolpyruvate. Catalysis depends on aspartate 335, which acts as the Proton acceptor. Residues arginine 366 and arginine 408 each coordinate phosphoenolpyruvate.

It belongs to the EPSP synthase family. In terms of assembly, monomer.

It is found in the cytoplasm. It carries out the reaction 3-phosphoshikimate + phosphoenolpyruvate = 5-O-(1-carboxyvinyl)-3-phosphoshikimate + phosphate. Its pathway is metabolic intermediate biosynthesis; chorismate biosynthesis; chorismate from D-erythrose 4-phosphate and phosphoenolpyruvate: step 6/7. Its function is as follows. Catalyzes the transfer of the enolpyruvyl moiety of phosphoenolpyruvate (PEP) to the 5-hydroxyl of shikimate-3-phosphate (S3P) to produce enolpyruvyl shikimate-3-phosphate and inorganic phosphate. The sequence is that of 3-phosphoshikimate 1-carboxyvinyltransferase from Crocosphaera subtropica (strain ATCC 51142 / BH68) (Cyanothece sp. (strain ATCC 51142)).